We begin with the raw amino-acid sequence, 149 residues long: L-alanine exporter AlaE (149 aa).

Helical transmembrane passes span 16–36 (FAMVVYCSVVNMLIEIFLSGM), 46–66 (LVAIPVNILIAWPYGVYRDLI), 85–105 (VLAYVTFQSPVYIIILLTVGA), and 112–132 (AAVSSNIVVSMLMGAVYGYFL).

The protein belongs to the AlaE exporter family.

The protein resides in the cell inner membrane. In terms of biological role, exports L-alanine. The chain is L-alanine exporter AlaE from Salmonella arizonae (strain ATCC BAA-731 / CDC346-86 / RSK2980).